The chain runs to 476 residues: Aspartyl/glutamyl-tRNA(Asn/Gln) amidotransferase subunit B (476 aa).

Belongs to the GatB/GatE family. GatB subfamily. As to quaternary structure, heterotrimer of A, B and C subunits.

The catalysed reaction is L-glutamyl-tRNA(Gln) + L-glutamine + ATP + H2O = L-glutaminyl-tRNA(Gln) + L-glutamate + ADP + phosphate + H(+). It carries out the reaction L-aspartyl-tRNA(Asn) + L-glutamine + ATP + H2O = L-asparaginyl-tRNA(Asn) + L-glutamate + ADP + phosphate + 2 H(+). Its function is as follows. Allows the formation of correctly charged Asn-tRNA(Asn) or Gln-tRNA(Gln) through the transamidation of misacylated Asp-tRNA(Asn) or Glu-tRNA(Gln) in organisms which lack either or both of asparaginyl-tRNA or glutaminyl-tRNA synthetases. The reaction takes place in the presence of glutamine and ATP through an activated phospho-Asp-tRNA(Asn) or phospho-Glu-tRNA(Gln). This chain is Aspartyl/glutamyl-tRNA(Asn/Gln) amidotransferase subunit B, found in Lactobacillus gasseri (strain ATCC 33323 / DSM 20243 / BCRC 14619 / CIP 102991 / JCM 1131 / KCTC 3163 / NCIMB 11718 / NCTC 13722 / AM63).